The following is a 665-amino-acid chain: UvrABC system protein B (665 aa).

One can recognise a Helicase ATP-binding domain in the interval 25-412 (ASIEGGNRYQ…ENRIVEQVIR (388 aa)). 38–45 (GATGTGKT) is a binding site for ATP. A Beta-hairpin motif is present at residues 91–114 (YYDYYQPEAYIPVTDTYIEKTAAI). In terms of domain architecture, Helicase C-terminal spans 429-583 (QIDDLLGEIK…VAYNKLHGIT (155 aa)). The UVR domain maps to 626-661 (PNLIDKLEAQMKEASKKLEFEEAAKLRDRIKQLRDK).

Belongs to the UvrB family. Forms a heterotetramer with UvrA during the search for lesions. Interacts with UvrC in an incision complex.

The protein resides in the cytoplasm. Functionally, the UvrABC repair system catalyzes the recognition and processing of DNA lesions. A damage recognition complex composed of 2 UvrA and 2 UvrB subunits scans DNA for abnormalities. Upon binding of the UvrA(2)B(2) complex to a putative damaged site, the DNA wraps around one UvrB monomer. DNA wrap is dependent on ATP binding by UvrB and probably causes local melting of the DNA helix, facilitating insertion of UvrB beta-hairpin between the DNA strands. Then UvrB probes one DNA strand for the presence of a lesion. If a lesion is found the UvrA subunits dissociate and the UvrB-DNA preincision complex is formed. This complex is subsequently bound by UvrC and the second UvrB is released. If no lesion is found, the DNA wraps around the other UvrB subunit that will check the other stand for damage. This chain is UvrABC system protein B, found in Nostoc sp. (strain PCC 7120 / SAG 25.82 / UTEX 2576).